The chain runs to 366 residues: Sperm equatorial segment protein 1 (366 aa).

The signal sequence occupies residues 1–18 (MKFLVLLVALLLWPSSLP). N-linked (GlcNAc...) asparagine glycosylation is present at Asn129. Positions 139–204 (PFIEKDEPEP…EDVPQLSGDN (66 aa)) are disordered. The span at 144 to 157 (DEPEPEPEPEPEPE) shows a compositional bias: acidic residues. Residues 165–189 (APTQVPSVTEPSQDVTSLSGSTDLG) are compositionally biased toward polar residues.

It belongs to the SPESP1 family. Glycosylated. In testis there are two predominant forms of 77- and 67-kDa and a form of 47-kDa, whereas in epididymal sperm from caput, corpus, and cauda there are two forms of 47- and 43-kDa. Testis forms contain complex carbohydrate residues. Epididymal sperm forms are N-glycosylated. Then undergoes significant glycosylation in the testis and that the majority of these glycoconjugates are removed by the time sperm reach the caput epididymis.

Its subcellular location is the cytoplasmic vesicle. It is found in the secretory vesicle. The protein resides in the acrosome. Functionally, involved in fertilization ability of sperm. This Bos taurus (Bovine) protein is Sperm equatorial segment protein 1.